Consider the following 1487-residue polypeptide: Chromosome partition protein MukB (1487 aa).

34–41 (GGNGAGKS) serves as a coordination point for ATP. Coiled-coil stretches lie at residues 297–426 (SSRE…LEKA), 460–666 (ALKH…RLAS), 781–806 (RAAREQRLELLRSEREEVVEKHAKAA), 836–1111 (EQAL…RTFV), and 1210–1266 (VEAI…LSNI). The interval 667 to 784 (PGGSNDPRLK…VIPLFGRAAR (118 aa)) is flexible hinge.

The protein belongs to the SMC family. MukB subfamily. Homodimerization via its hinge domain. Binds to DNA via its C-terminal region. Interacts, and probably forms a ternary complex, with MukE and MukF via its C-terminal region. The complex formation is stimulated by calcium or magnesium. Interacts with tubulin-related protein FtsZ.

Its subcellular location is the cytoplasm. It localises to the nucleoid. Plays a central role in chromosome condensation, segregation and cell cycle progression. Functions as a homodimer, which is essential for chromosome partition. Involved in negative DNA supercoiling in vivo, and by this means organize and compact chromosomes. May achieve or facilitate chromosome segregation by condensation DNA from both sides of a centrally located replisome during cell division. In Vibrio vulnificus (strain CMCP6), this protein is Chromosome partition protein MukB.